The primary structure comprises 212 residues: Lysozyme g-like protein 2 (212 aa).

A signal peptide spans 1–19; it reads MLSSVVFWGLIALIGTSRG. Disulfide bonds link cysteine 39–cysteine 92 and cysteine 53–cysteine 61. The active site involves glutamate 105.

It belongs to the glycosyl hydrolase 23 family. In terms of tissue distribution, strong expression detected in the eye and weak expression in the testis. No expression is observed in any other tissues.

The protein localises to the secreted. Its function is as follows. May act as a potent antibacterial protein that may play a role in the innate immunity. The protein is Lysozyme g-like protein 2 (LYG2) of Homo sapiens (Human).